A 142-amino-acid chain; its full sequence is Large ribosomal subunit protein uL13 (142 aa).

The protein belongs to the universal ribosomal protein uL13 family. In terms of assembly, part of the 50S ribosomal subunit.

Its function is as follows. This protein is one of the early assembly proteins of the 50S ribosomal subunit, although it is not seen to bind rRNA by itself. It is important during the early stages of 50S assembly. In Polynucleobacter asymbioticus (strain DSM 18221 / CIP 109841 / QLW-P1DMWA-1) (Polynucleobacter necessarius subsp. asymbioticus), this protein is Large ribosomal subunit protein uL13.